The sequence spans 299 residues: MAAAEEGCDAGVEADRELEELLESALDDFDKAKPSPAPPPTTSAPDASGPQKKSPGDTAKDALFASQEKFFQELFDSELASQATAEFEKAMKELAEEEPHLVEQFQKLSEAAGRVGSDANSQQEFTSCLKETLSGLAKNATDLQNSGMSEEELTKAMEGLGMDDGDGDGNILPIMQSIMQNLLSKDVLYPSLKEITEKYPEWLQSHQESIPPEQFEKYQEQHSVMGKICEQFEAETPTDSEATHRARFEAVLDLMQQLQDLGHPPKELAGEMPPGLNFDLDTLNLSGPPGANGEQCLIM.

The disordered stretch occupies residues 1 to 63 (MAAAEEGCDA…SPGDTAKDAL (63 aa)). Ala2 is modified (N-acetylalanine). The docking to the peroxisome membrane and binding to PEX3 stretch occupies residues 2 to 56 (AAAEEGCDAGVEADRELEELLESALDDFDKAKPSPAPPPTTSAPDASGPQKKSPG). Residues 2–91 (AAAEEGCDAG…QATAEFEKAM (90 aa)) are necessary for PEX19 function on peroxisome biogenesis. Positions 16-27 (RELEELLESALD) are enriched in acidic residues. 3 positions are modified to phosphoserine: Ser35, Ser54, and Ser66. Thr236 carries the post-translational modification Phosphothreonine. Cys296 is subject to Cysteine methyl ester. Cys296 carries the S-farnesyl cysteine lipid modification. Positions 297-299 (LIM) are cleaved as a propeptide — removed in mature form.

This sequence belongs to the peroxin-19 family. Interacts with a broad range of peroxisomal membrane proteins, including PEX3, PEX10, PEX11A, PEX11B, PEX12, PEX13, PEX14 and PEX16, PXMP2/PMP22, PXMP4/PMP24, SLC25A17/PMP34, ABCD1/ALDP, ABCD2/ALDRP, and ABCD3/PMP70. Also interacts with the tumor suppressor CDKN2A/p19ARF. In terms of tissue distribution, ubiquitous.

Its subcellular location is the cytoplasm. The protein localises to the peroxisome membrane. Necessary for early peroxisomal biogenesis. Acts both as a cytosolic chaperone and as an import receptor for peroxisomal membrane proteins (PMPs). Binds and stabilizes newly synthesized PMPs in the cytoplasm by interacting with their hydrophobic membrane-spanning domains, and targets them to the peroxisome membrane by binding to the integral membrane protein PEX3. Excludes CDKN2A from the nucleus and prevents its interaction with MDM2, which results in active degradation of TP53. This Cricetulus griseus (Chinese hamster) protein is Peroxisomal biogenesis factor 19 (PEX19).